Here is a 335-residue protein sequence, read N- to C-terminus: Acetyl-coenzyme A carboxylase carboxyl transferase subunit alpha (335 aa).

Positions 48-308 constitute a CoA carboxyltransferase C-terminal domain; that stretch reads TLELKVDALR…KEILIEELKA (261 aa).

It belongs to the AccA family. Acetyl-CoA carboxylase is a heterohexamer composed of biotin carboxyl carrier protein (AccB), biotin carboxylase (AccC) and two subunits each of ACCase subunit alpha (AccA) and ACCase subunit beta (AccD).

It localises to the cytoplasm. The enzyme catalyses N(6)-carboxybiotinyl-L-lysyl-[protein] + acetyl-CoA = N(6)-biotinyl-L-lysyl-[protein] + malonyl-CoA. It functions in the pathway lipid metabolism; malonyl-CoA biosynthesis; malonyl-CoA from acetyl-CoA: step 1/1. Component of the acetyl coenzyme A carboxylase (ACC) complex. First, biotin carboxylase catalyzes the carboxylation of biotin on its carrier protein (BCCP) and then the CO(2) group is transferred by the carboxyltransferase to acetyl-CoA to form malonyl-CoA. In Pelodictyon phaeoclathratiforme (strain DSM 5477 / BU-1), this protein is Acetyl-coenzyme A carboxylase carboxyl transferase subunit alpha.